The chain runs to 711 residues: MAQAAVAVAEVTQLLCAAGGALELAELRRRLRTSLGTDALERLLRDCGRFVVASRAVVAVGAGREAAAAASERLVLAVSSLRLCRAHQGPKPGCTGLCAQLHLCKFLIYGNCKFLKTGKNCRNGHNLKTDHNLSVLRTHGVDHLTYTELCQLLLQNDPSLLPDICLHYNKGDGPFGSCSFQKQCIKLHICQYFLQGECKFGTSCKRSHEFTNSESLEQLERLGLSSDLVSRLLSTYRNAYDIKNKGSALSKVSPSPAGPQGSSERKDSSGPVSPGTPSQEESEQICLYHIRKSCSFQEKCHRVHFHLPYRWQFLDGGKWKDLDNMELIEEAYSNPSKDRIVYTESAAGFHFDNLDFNSMKFGNTLARRLSTASSVTKPPHFILTTDWIWYWMDEFGSWQEYGRQGSGHPVTTISSSDVERAYLAFCAPGADAQAATLKFQAGKHNYELHFKAFLQKNLVYGTIRKVCRRPKYVSPQDVQMKQSCNTKLHGPKSIPDYWDPAALPDLGFKKITLSSSSEEYQKVWNIFNRTLPFYFVQKIERIQNMGLWEVYQWQKCQMQKQNGGKEVDERQLFHGTSANFVDAICQQNFDWRVCGLHGTSYGKGSYFARDAAYSHHYSKSDTHSHMMFLARVLVGDFVRGSTSFVRPPAKEGQSNAFYDSCVNSMSDPTIFVVFEKHQVYPEYLIQYSTSSKPPASPSIFVALGNLFTSRQ.

3 consecutive C3H1-type zinc fingers follow at residues 103 to 128, 164 to 188, and 189 to 211; these read LCKFLIYGNCKFLKTGKNCRNGHNLK, ICLHYNKGDGPFGSCSFQKQCIKLH, and ICQYFLQGECKFGTSCKRSHEFT. The segment at 247–279 is disordered; that stretch reads SALSKVSPSPAGPQGSSERKDSSGPVSPGTPSQ. Serine 268 bears the Phosphoserine mark. 2 C3H1-type zinc fingers span residues 280 to 307 and 281 to 306; these read EESEQICLYHIRKSCSFQEKCHRVHFHL and ESEQICLYHIRKSCSFQEKCHRVHFH. WWE domains follow at residues 308–371 and 374–468; these read PYRW…RLST and SVTK…KVCR. ADP-ribosylcysteine is present on cysteine 484. The 215-residue stretch at 494 to 708 folds into the PARP catalytic domain; the sequence is IPDYWDPAAL…IFVALGNLFT (215 aa). An ADP-ribosyl aspartic acid mark is found at aspartate 610 and aspartate 621.

It belongs to the ARTD/PARP family. Interacts with PARP11; this interaction plays a key role in zika virus suppression. Interacts with ISG15. In terms of processing, auto-mono-ADP-ribosylated. Phosphorylated by PRKD1.

Its subcellular location is the nucleus. The protein localises to the golgi apparatus. It localises to the trans-Golgi network. It is found in the cytoplasm. The protein resides in the stress granule. It catalyses the reaction L-aspartyl-[protein] + NAD(+) = 4-O-(ADP-D-ribosyl)-L-aspartyl-[protein] + nicotinamide. The enzyme catalyses L-cysteinyl-[protein] + NAD(+) = S-(ADP-D-ribosyl)-L-cysteinyl-[protein] + nicotinamide + H(+). Mono-ADP-ribosyltransferase that mediates mono-ADP-ribosylation of target proteins. Displays anti-alphavirus activity during IFN-gamma immune activation by directly ADP-ribosylating the alphaviral non-structural proteins nsP3 and nsP4. Acts as a component of the PRKD1-driven regulatory cascade that selectively controls a major branch of the basolateral transport pathway by catalyzing the MARylation of GOLGA1. Acts also as a key regulator of mitochondrial function, protein translation, and inflammation. Inhibits PINK1/Parkin-dependent mitophagy and promotes cartilage degeneration by inhibiting the ubiquitination and SUMOylation of MFN1/2 by upregulating ISG15 and ISGylation. The chain is Protein mono-ADP-ribosyltransferase PARP12 from Mus musculus (Mouse).